Here is a 177-residue protein sequence, read N- to C-terminus: Large ribosomal subunit protein uL6 (177 aa).

This sequence belongs to the universal ribosomal protein uL6 family. In terms of assembly, part of the 50S ribosomal subunit.

Functionally, this protein binds to the 23S rRNA, and is important in its secondary structure. It is located near the subunit interface in the base of the L7/L12 stalk, and near the tRNA binding site of the peptidyltransferase center. In Enterobacter sp. (strain 638), this protein is Large ribosomal subunit protein uL6.